The following is a 130-amino-acid chain: MVRMNVLADALKSINNAEKRGKRQVLIRPCSKVIVRFLTVMMKHGYIGEFEIIDDHRAGKIVVNLTGRLNKCGVISPRFDVQLKDLEKWQNNLFPSRQFGFIVLTTSAGIMDHEEARRKHTGGKILGFFF.

The residue at position 88 (K88) is an N6-succinyllysine.

It belongs to the universal ribosomal protein uS8 family. Component of the 40S ribosomal subunit. Part of the small subunit (SSU) processome, composed of more than 70 proteins and the RNA chaperone small nucleolar RNA (snoRNA) U3.

The protein resides in the cytoplasm. It is found in the nucleus. It localises to the nucleolus. Functionally, component of the small ribosomal subunit. Part of the small subunit (SSU) processome, first precursor of the small eukaryotic ribosomal subunit. During the assembly of the SSU processome in the nucleolus, many ribosome biogenesis factors, an RNA chaperone and ribosomal proteins associate with the nascent pre-rRNA and work in concert to generate RNA folding, modifications, rearrangements and cleavage as well as targeted degradation of pre-ribosomal RNA by the RNA exosome. Required for proper erythropoiesis. The sequence is that of Small ribosomal subunit protein uS8 (RPS15A) from Pongo abelii (Sumatran orangutan).